Reading from the N-terminus, the 145-residue chain is Plastocyanin, chloroplastic (145 aa).

Residues 1–47 (MKATLRAPASRASAVRPVASLKAAAQRVASVAGVSVASLALTLAAHA) constitute a chloroplast transit peptide. The Plastocyanin-like domain occupies 48-145 (DATVKLGADS…AGMVGKIIVQ (98 aa)). Cu cation contacts are provided by His-85, Cys-130, His-133, and Met-138.

It belongs to the plastocyanin family. Cu(2+) is required as a cofactor.

It is found in the plastid. It localises to the chloroplast thylakoid membrane. Its function is as follows. Participates in electron transfer between P700 and the cytochrome b6-f complex in photosystem I. The chain is Plastocyanin, chloroplastic (PETE) from Chlamydomonas reinhardtii (Chlamydomonas smithii).